A 121-amino-acid chain; its full sequence is Protein yippee-like At3g55890 (121 aa).

One can recognise a Yippee domain in the interval 12 to 109 (NIYICKLCKT…LELYKISGPH (98 aa)). Zn(2+) is bound by residues C16, C19, C72, and C75.

It belongs to the yippee family.

The chain is Protein yippee-like At3g55890 from Arabidopsis thaliana (Mouse-ear cress).